Reading from the N-terminus, the 523-residue chain is MESAPAAPDPAASEPGSSGADAAAGSRETPLNQESARKSEPPAPVRRQSYSSTSRGISVTKKTHTSQIEIIPCKICGDKSSGIHYGVITCEGCKGFFRRSQQSNATYSCPRQKNCLIDRTSRNRCQHCRLQKCLAVGMSRDAVKFGRMSKKQRDSLYAEVQKHRMQQQQRDHQQQPGEAEPLTPTYNISANGLTELHDDLSNYIDGHTPEGSKADSAVSSFYLDIQPSPDQSGLDINGIKPEPICDYTPASGFFPYCSFTNGETSPTVSMAELEHLAQNISKSHLETCQYLREELQQITWQTFLQEEIENYQNKQREVMWQLCAIKITEAIQYVVEFAKRIDGFMELCQNDQIVLLKAGSLEVVFIRMCRAFDSQNNTVYFDGKYASPDVFKSLGCEDFISFVFEFGKSLCSMHLTEDEIALFSAFVLMSADRSWLQEKVKIEKLQQKIQLALQHVLQKNHREDGILTKLICKVSTLRALCGRHTEKLMAFKAIYPDIVRLHFPPLYKELFTSEFEPAMQIDG.

The segment covering 1–26 (MESAPAAPDPAASEPGSSGADAAAGS) has biased composition (low complexity). Positions 1 to 63 (MESAPAAPDP…SRGISVTKKT (63 aa)) are disordered. Lysine 38 carries the post-translational modification N6-methyllysine. Residues 48–57 (QSYSSTSRGI) show a composition bias toward polar residues. 2 NR C4-type zinc fingers span residues 73 to 93 (CKIC…CEGC) and 109 to 133 (CPRQ…LQKC). A DNA-binding region (nuclear receptor) is located at residues 73 to 138 (CKICGDKSSG…RLQKCLAVGM (66 aa)). Residues 154 to 183 (DSLYAEVQKHRMQQQQRDHQQQPGEAEPLT) are disordered. Threonine 183 carries the phosphothreonine; by MAPK1 modification. Lysine 240 is covalently cross-linked (Glycyl lysine isopeptide (Lys-Gly) (interchain with G-Cter in SUMO)). The NR LBD domain occupies 272–510 (ELEHLAQNIS…LHFPPLYKEL (239 aa)). The short motif at 506–523 (LYKELFTSEFEPAMQIDG) is the AF-2 element.

It belongs to the nuclear hormone receptor family. NR1 subfamily. In terms of assembly, monomer. Interacts (via the DNA-binding domain) with HIF1A; the interaction enhances HIF1A transcription under hypoxia through increasing protein stability. Interacts with CEBPB; the interaction disrupts the interaction CEBPB:EP300. Interacts with the coactivators NCOA2, PPARGC1A (via LXXLL motif), EP300 and MED1. Interacts with the corepressor NCOR1. Interacts with MAGED1 and CTNNB1. Interacts with CRY1 and PER2. Interacts (via AF-2 motif) with PROX1. Interacts with NRIP1. Isoform 4 interacts (via AF-2 motif) with isoform 1 of FOXP3 (via LXXLL motif). Phosphorylation by conventional PKCs in neurons inhibits transcriptional activity. Phosphorylated on Thr-183 by MAPK1/ERK1 in vitro. In terms of processing, sumoylated by SENP1 and SENP2. Sumoylation, promoted by PIAS2, PIAS3, PIAS4 but not PIAS1, enhances the transcriptional activity. Desumoylated by SENP1. Post-translationally, ubiquitinated, leading to its degradation by the proteasome. Proteasomal degradation is required for efficient transcriptional activity and is prevented by HR. Monomethylated at Lys-38 by EZH2, this creates a degron recognized by a DCX (DDB1-DCAF1/VPRBP-CUL4A-RBX1) E3 ubiquitin ligase complex. Widely expressed in a number of tissues. Expressed in both regulatory T-cells (Treg) and effector T-cells (Teff). Isoform 4: Highly expressed in the central nervous system, including in the cerebellum.

It localises to the nucleus. In terms of biological role, nuclear receptor that binds DNA as a monomer to ROR response elements (RORE) containing a single core motif half-site 5'-AGGTCA-3' preceded by a short A-T-rich sequence. Key regulator of embryonic development, cellular differentiation, immunity, circadian rhythm as well as lipid, steroid, xenobiotics and glucose metabolism. Considered to have intrinsic transcriptional activity, have some natural ligands like oxysterols that act as agonists (25-hydroxycholesterol) or inverse agonists (7-oxygenated sterols), enhancing or repressing the transcriptional activity, respectively. Recruits distinct combinations of cofactors to target genes regulatory regions to modulate their transcriptional expression, depending on the tissue, time and promoter contexts. Regulates genes involved in photoreceptor development including OPN1SW, OPN1SM and ARR3 and skeletal muscle development with MYOD1. Required for proper cerebellum development. Regulates SHH gene expression, among others, to induce granule cells proliferation as well as expression of genes involved in calcium-mediated signal transduction. Regulates the circadian expression of several clock genes, including CLOCK, BMAL1, NPAS2 and CRY1. Competes with NR1D1 for binding to their shared DNA response element on some clock genes such as BMAL1, CRY1 and NR1D1 itself, resulting in NR1D1-mediated repression or RORA-mediated activation of clock genes expression, leading to the circadian pattern of clock genes expression. Therefore influences the period length and stability of the clock. Regulates genes involved in lipid metabolism such as apolipoproteins APOA1, APOA5, APOC3 and PPARG. In liver, has specific and redundant functions with RORC as positive or negative modulator of expression of genes encoding phase I and phase II proteins involved in the metabolism of lipids, steroids and xenobiotics, such as CYP7B1 and SULT2A1. Induces a rhythmic expression of some of these genes. In addition, interplays functionally with NR1H2 and NR1H3 for the regulation of genes involved in cholesterol metabolism. Also involved in the regulation of hepatic glucose metabolism through the modulation of G6PC1 and PCK1. In adipose tissue, plays a role as negative regulator of adipocyte differentiation, probably acting through dual mechanisms. May suppress CEBPB-dependent adipogenesis through direct interaction and PPARG-dependent adipogenesis through competition for DNA-binding. Downstream of IL6 and TGFB and synergistically with RORC isoform 2, is implicated in the lineage specification of uncommitted CD4(+) T-helper (T(H)) cells into T(H)17 cells, antagonizing the T(H)1 program. Probably regulates IL17 and IL17F expression on T(H) by binding to the essential enhancer conserved non-coding sequence 2 (CNS2) in the IL17-IL17F locus. Involved in hypoxia signaling by interacting with and activating the transcriptional activity of HIF1A. May inhibit cell growth in response to cellular stress. May exert an anti-inflammatory role by inducing CHUK expression and inhibiting NF-kappa-B signaling. This chain is Nuclear receptor ROR-alpha (RORA), found in Homo sapiens (Human).